The chain runs to 365 residues: Phenoloxidase-activating factor 1 (365 aa).

The signal sequence occupies residues 1-23 (MKQVHFFILWFFVLNLYSIKAQA). A Clip domain is found at 24–74 (GCRTPNGENARCVPINNCKILYDSVLTSDPEVIRFLRASQCGYNGQPLVCC). 8 cysteine pairs are disulfide-bonded: cysteine 25–cysteine 73, cysteine 35–cysteine 64, cysteine 41–cysteine 74, cysteine 101–cysteine 240, cysteine 140–cysteine 156, cysteine 184–cysteine 191, cysteine 284–cysteine 301, and cysteine 311–cysteine 340. One can recognise a Peptidase S1 domain in the interval 110-364 (ILNGDDTVPE…YRDWIEGNIR (255 aa)). An N-linked (GlcNAc...) asparagine glycan is attached at asparagine 131. Histidine 155 acts as the Charge relay system in catalysis. The Ca(2+) site is built by glutamate 175, asparagine 177, threonine 180, and aspartate 183. Residue aspartate 220 is the Charge relay system of the active site. Residue serine 315 is the Charge relay system of the active site.

This sequence belongs to the peptidase S1 family. CLIP subfamily. In the active form, heterodimer of a light chain and a heavy chain; disulfide-linked. Cleaved following the recognition of pathogen-derived products, probably by a lysyl endopeptidase.

It is found in the secreted. Protein stability and endopeptidase activity are calcium dependent. First cleavage on prophenoloxidase PPO1 and PPO2 is not dependent on calcium; however, cleavage of PPO1 and PPO2 to their active forms is dependent on calcium and on the presence of PPAF2 and PPAF3. Cleavage of PPAF2 is inhibited by calcium. Inhibited by ethylenediaminetetraacetic acid (EDTA), p-nitrophenyl-p'-guanido-benzoate, diisopropylphosphorofluoridate (iPr2PF) and p-(Amidinophenyl)methanesulfonyl fluoride (p-APMSF). Its function is as follows. Serine endopeptidase which, by cleaving prophenoloxidase PPO1 and PPO2, is required for the activation of the prophenoloxidase cascade probably following the recognition of pathogen-derived products. The chain is Phenoloxidase-activating factor 1 from Holotrichia diomphalia (Korean black chafer).